Here is a 394-residue protein sequence, read N- to C-terminus: Probable peptidoglycan glycosyltransferase FtsW (394 aa).

Over 1 to 26 (MNTMRPRHLNQRGKPVSRPISLYDKW) the chain is Cytoplasmic. The helical transmembrane segment at 27 to 47 (LIGAVFGLLIIGLMMVASSSV) threads the bilayer. The Periplasmic portion of the chain corresponds to 48–57 (MISTKYFHQP). The helical transmembrane segment at 58–78 (FHFLIRQACYLFVGLLLALIV) threads the bilayer. Residues 79 to 88 (VRTDSSFWEK) lie on the Cytoplasmic side of the membrane. The chain crosses the membrane as a helical span at residues 89-109 (ISMPMMIGCVFLLLIVLIPGI). Residues 110–118 (GKSVNGSRR) lie on the Periplasmic side of the membrane. A helical membrane pass occupies residues 119 to 139 (WLALGPIGVQVSELTKLAMIF). The Cytoplasmic segment spans residues 140–154 (YLSGYLVRQQEAVCE). A helical transmembrane segment spans residues 155–175 (SIFGFIKPMAILAVVSVLLLL). The Periplasmic segment spans residues 176 to 177 (EP). Residues 178-198 (DFGATVVISGTVMAMLFLAGV) traverse the membrane as a helical segment. The Cytoplasmic segment spans residues 199 to 201 (KLR). Residues 202-222 (YYFGLMLVVVTALALLAVSSP) traverse the membrane as a helical segment. Over 223–278 (YRVARLTAFLDPWADQYNSGYQLTQSLIAFGRGGWFGTGLGESIQKLLYLPEAHTD) the chain is Periplasmic. A helical membrane pass occupies residues 279–299 (FLFAVIAEELGLFGILVVITL). Over 300–327 (YSILVIRGLNIGYTAYTQERHFASYTAY) the chain is Cytoplasmic. Residues 328–348 (GLTIWLALQASINMGVNAGLL) traverse the membrane as a helical segment. Topologically, residues 349 to 354 (PTKGLT) are periplasmic. The helical transmembrane segment at 355-375 (LPLLSYGGASMVINCIVIALL) threads the bilayer. Residues 376-394 (LRIDHENRWQSLGLRPLTA) lie on the Cytoplasmic side of the membrane.

It belongs to the SEDS family. FtsW subfamily.

The protein resides in the cell inner membrane. It catalyses the reaction [GlcNAc-(1-&gt;4)-Mur2Ac(oyl-L-Ala-gamma-D-Glu-L-Lys-D-Ala-D-Ala)](n)-di-trans,octa-cis-undecaprenyl diphosphate + beta-D-GlcNAc-(1-&gt;4)-Mur2Ac(oyl-L-Ala-gamma-D-Glu-L-Lys-D-Ala-D-Ala)-di-trans,octa-cis-undecaprenyl diphosphate = [GlcNAc-(1-&gt;4)-Mur2Ac(oyl-L-Ala-gamma-D-Glu-L-Lys-D-Ala-D-Ala)](n+1)-di-trans,octa-cis-undecaprenyl diphosphate + di-trans,octa-cis-undecaprenyl diphosphate + H(+). It participates in cell wall biogenesis; peptidoglycan biosynthesis. Functionally, peptidoglycan polymerase that is essential for cell division. This chain is Probable peptidoglycan glycosyltransferase FtsW, found in Legionella pneumophila subsp. pneumophila (strain Philadelphia 1 / ATCC 33152 / DSM 7513).